The chain runs to 83 residues: Exodeoxyribonuclease 7 small subunit (83 aa).

The protein belongs to the XseB family. In terms of assembly, heterooligomer composed of large and small subunits.

It is found in the cytoplasm. It catalyses the reaction Exonucleolytic cleavage in either 5'- to 3'- or 3'- to 5'-direction to yield nucleoside 5'-phosphates.. Bidirectionally degrades single-stranded DNA into large acid-insoluble oligonucleotides, which are then degraded further into small acid-soluble oligonucleotides. This is Exodeoxyribonuclease 7 small subunit from Rhodopseudomonas palustris (strain BisB5).